The following is a 412-amino-acid chain: Aspartate kinase Ask_LysC (412 aa).

The region spanning 265–332 (LTIRGVPDTP…QGIAAEMGAR (68 aa)) is the ACT domain.

It belongs to the aspartokinase family.

The protein resides in the cytoplasm. It carries out the reaction L-aspartate + ATP = 4-phospho-L-aspartate + ADP. It functions in the pathway amino-acid biosynthesis; L-lysine biosynthesis via DAP pathway; (S)-tetrahydrodipicolinate from L-aspartate: step 1/4. It participates in amino-acid biosynthesis; L-methionine biosynthesis via de novo pathway; L-homoserine from L-aspartate: step 1/3. Its pathway is amino-acid biosynthesis; L-threonine biosynthesis; L-threonine from L-aspartate: step 1/5. Allosterically and strongly feedback inhibited by tryptophan. Addition of lysine alone slightly enhances activity. The simultaneous addition of lysine and tryptophan leads to very strong feedback inhibition of the enzyme. The feedback control by tryptophan is reduced in the presence of the compatible solutes hydroxyectoine or ectoine. Functionally, involved in the biosynthesis of L-aspartate-beta-semialdehyde which is a central intermediate in the biosynthesis of different amino acids (L-lysine, L-methionine, L-threonine). Catalyzes the phosphorylation of the beta-carboxyl group of L-aspartate to yield 4-phospho-L-aspartate. This chain is Aspartate kinase Ask_LysC (lysC), found in Stutzerimonas stutzeri (strain A1501) (Pseudomonas stutzeri).